Reading from the N-terminus, the 155-residue chain is 3-hydroxyacyl-[acyl-carrier-protein] dehydratase FabZ (155 aa).

Histidine 58 is a catalytic residue.

It belongs to the thioester dehydratase family. FabZ subfamily.

The protein resides in the cytoplasm. The catalysed reaction is a (3R)-hydroxyacyl-[ACP] = a (2E)-enoyl-[ACP] + H2O. Its function is as follows. Involved in unsaturated fatty acids biosynthesis. Catalyzes the dehydration of short chain beta-hydroxyacyl-ACPs and long chain saturated and unsaturated beta-hydroxyacyl-ACPs. In Rhizobium leguminosarum bv. trifolii (strain WSM2304), this protein is 3-hydroxyacyl-[acyl-carrier-protein] dehydratase FabZ.